A 70-amino-acid polypeptide reads, in one-letter code: Translation initiation factor IF-1 (70 aa).

In terms of domain architecture, S1-like spans 1-70 (MKNDKLFLTG…LKLGRITQRK (70 aa)).

Belongs to the IF-1 family. In terms of assembly, component of the 30S ribosomal translation pre-initiation complex which assembles on the 30S ribosome in the order IF-2 and IF-3, IF-1 and N-formylmethionyl-tRNA(fMet); mRNA recruitment can occur at any time during PIC assembly.

It localises to the cytoplasm. Its function is as follows. One of the essential components for the initiation of protein synthesis. Stabilizes the binding of IF-2 and IF-3 on the 30S subunit to which N-formylmethionyl-tRNA(fMet) subsequently binds. Helps modulate mRNA selection, yielding the 30S pre-initiation complex (PIC). Upon addition of the 50S ribosomal subunit IF-1, IF-2 and IF-3 are released leaving the mature 70S translation initiation complex. This is Translation initiation factor IF-1 from Mycoplasma genitalium (strain ATCC 33530 / DSM 19775 / NCTC 10195 / G37) (Mycoplasmoides genitalium).